We begin with the raw amino-acid sequence, 194 residues long: MLNVTITDSAQTYLRELLEKQACEGIGIRMFVSNPGTPQAETCIAYCRPGEAEEADHVMELSGFNAYFEDRSVPFLDEAKVDYAPDKMGGQLTIRAPNSKMPKISDDSPIEDKINYVLYNEVNPGLASHGGNVSLERLTDDGMAILRFGGGCQGCSAVDMTLKQGVEKTLMERIPELAGVRDVTDHSDKSNAYY.

Residues Cys152 and Cys155 each contribute to the [4Fe-4S] cluster site.

The protein belongs to the NfuA family. In terms of assembly, homodimer. It depends on [4Fe-4S] cluster as a cofactor.

In terms of biological role, involved in iron-sulfur cluster biogenesis. Binds a 4Fe-4S cluster, can transfer this cluster to apoproteins, and thereby intervenes in the maturation of Fe/S proteins. Could also act as a scaffold/chaperone for damaged Fe/S proteins. This chain is Fe/S biogenesis protein NfuA, found in Teredinibacter turnerae (strain ATCC 39867 / T7901).